Consider the following 468-residue polypeptide: Microtubule-associated tyrosine carboxypeptidase 1 (468 aa).

The segment covering 1–10 has biased composition (polar residues); the sequence is MVLDSGTQVY. Disordered stretches follow at residues 1–39 and 77–112; these read MVLDSGTQVYEQAPPSPPASSPSQHHKLKPSNRNGPPLY and MKRSESTYSVNSTGRRGRGKAPLGRGCDPGGGTLRP. Zn(2+) is bound at residue H277. The active-site Nucleophile is the E278. 2 residues coordinate Zn(2+): H282 and E313.

It belongs to the peptidase MATCAP family. Zn(2+) serves as cofactor.

The protein resides in the cytoplasm. The protein localises to the cytoskeleton. It carries out the reaction C-terminal L-alpha-aminoacyl-L-glutamyl-L-glutamyl-L-tyrosyl-[tubulin] + H2O = C-terminal L-alpha-aminoacyl-L-glutamyl-L-glutamyl-[tubulin] + L-tyrosine. The catalysed reaction is C-terminal L-alpha-aminoacyl-L-glutamyl-L-glutamyl-L-phenylalanyl-[tubulin] + H2O = C-terminal L-alpha-aminoacyl-L-glutamyl-L-glutamyl-[tubulin] + L-phenylalanine. In terms of biological role, tyrosine carboxypeptidase that removes the C-terminal tyrosine residue of alpha-tubulin, thereby regulating microtubule dynamics and function. Also able to remove the C-terminal phenylalanine residue of alpha-tubulin TUBA8. Recognizes adjacent tubulin dimers along the same protofilament. This chain is Microtubule-associated tyrosine carboxypeptidase 1, found in Rattus norvegicus (Rat).